A 343-amino-acid chain; its full sequence is MISRKALGSLVCLSAVATLIWIASGNWKVHYLPYYLPCPGIFSKKLQYLGDKPVQLFPQLFYQQPRVLAPKRQDVLTVTPWLAPIVWEGTFSPEILDSAYMPLNLTIGVTAFAVGKYTRFVSRFLKSAEMHFMKGYRVNYYIFTDNPKMIPDVQLQPGRRFDVVHIKKYSSWQEISVRRMEAINLHIAERSHREVDYLFCLDIDMVFHNAWGAETLGDMVAAIHPGYFNVPRSQFPYERRSSSAAYIPDGEGDFYYGGAVFGGLVKKVYEFTKICHMTILADKANGIMAAWQEESHLNRHFLTHKPSKLLSPEYLWDDRKPKPPEIFLIRFSTVDKNYQEVRN.

Topologically, residues 1–6 (MISRKA) are cytoplasmic. A helical; Signal-anchor for type II membrane protein membrane pass occupies residues 7–27 (LGSLVCLSAVATLIWIASGNW). Residues 28 to 343 (KVHYLPYYLP…VDKNYQEVRN (316 aa)) lie on the Lumenal side of the membrane. Asn-104 carries N-linked (GlcNAc...) asparagine glycosylation. Substrate is bound by residues 112 to 117 (FAVGKY), 202 to 204 (DID), and 224 to 227 (HPGY). Positions 202 and 204 each coordinate Mn(2+). Glu-294 acts as the Nucleophile in catalysis.

This sequence belongs to the glycosyltransferase 6 family. The cofactor is Mn(2+).

Its subcellular location is the golgi apparatus membrane. The protein operates within protein modification; protein glycosylation. Functionally, may catalyze the formation of some glycolipid via the addition of N-acetylgalactosamine (GalNAc) in alpha-1,3-linkage to some substrate. Glycolipids probably serve for adherence of some pathogens. This chain is Globoside alpha-1,3-N-acetylgalactosaminyltransferase 1, found in Gallus gallus (Chicken).